The chain runs to 562 residues: Arginine--tRNA ligase 2 (562 aa).

Positions Pro-122–His-132 match the 'HIGH' region motif.

This sequence belongs to the class-I aminoacyl-tRNA synthetase family. As to quaternary structure, monomer.

It is found in the cytoplasm. The enzyme catalyses tRNA(Arg) + L-arginine + ATP = L-arginyl-tRNA(Arg) + AMP + diphosphate. The protein is Arginine--tRNA ligase 2 (argS2) of Bacillus anthracis.